A 213-amino-acid chain; its full sequence is Large ribosomal subunit protein uL1 (213 aa).

It belongs to the universal ribosomal protein uL1 family. In terms of assembly, part of the 50S ribosomal subunit.

In terms of biological role, binds directly to 23S rRNA. Probably involved in E site tRNA release. Its function is as follows. Protein L1 is also a translational repressor protein, it controls the translation of its operon by binding to its mRNA. In Methanocella arvoryzae (strain DSM 22066 / NBRC 105507 / MRE50), this protein is Large ribosomal subunit protein uL1.